Reading from the N-terminus, the 953-residue chain is Isoleucine--tRNA ligase (953 aa).

The short motif at 58–68 (PYANGSIHIGH) is the 'HIGH' region element. L-isoleucyl-5'-AMP is bound at residue glutamate 577. The short motif at 618–622 (KMSKS) is the 'KMSKS' region element. Lysine 621 lines the ATP pocket. Zn(2+) is bound by residues cysteine 916, cysteine 919, cysteine 936, and cysteine 939.

Belongs to the class-I aminoacyl-tRNA synthetase family. IleS type 1 subfamily. In terms of assembly, monomer. It depends on Zn(2+) as a cofactor.

It localises to the cytoplasm. It catalyses the reaction tRNA(Ile) + L-isoleucine + ATP = L-isoleucyl-tRNA(Ile) + AMP + diphosphate. Catalyzes the attachment of isoleucine to tRNA(Ile). As IleRS can inadvertently accommodate and process structurally similar amino acids such as valine, to avoid such errors it has two additional distinct tRNA(Ile)-dependent editing activities. One activity is designated as 'pretransfer' editing and involves the hydrolysis of activated Val-AMP. The other activity is designated 'posttransfer' editing and involves deacylation of mischarged Val-tRNA(Ile). This chain is Isoleucine--tRNA ligase, found in Aeromonas salmonicida (strain A449).